Consider the following 693-residue polypeptide: Elongation factor G (693 aa).

In terms of domain architecture, tr-type G spans 9-283 (ERVRNIGIIA…AVCDYLPSPL (275 aa)). GTP contacts are provided by residues 18–25 (AHIDAGKT), 82–86 (DTPGH), and 136–139 (NKMD).

This sequence belongs to the TRAFAC class translation factor GTPase superfamily. Classic translation factor GTPase family. EF-G/EF-2 subfamily.

The protein resides in the cytoplasm. Catalyzes the GTP-dependent ribosomal translocation step during translation elongation. During this step, the ribosome changes from the pre-translocational (PRE) to the post-translocational (POST) state as the newly formed A-site-bound peptidyl-tRNA and P-site-bound deacylated tRNA move to the P and E sites, respectively. Catalyzes the coordinated movement of the two tRNA molecules, the mRNA and conformational changes in the ribosome. The polypeptide is Elongation factor G (Dehalococcoides mccartyi (strain ATCC BAA-2100 / JCM 16839 / KCTC 5957 / BAV1)).